An 844-amino-acid chain; its full sequence is Proto-oncogene vav (844 aa).

A Calponin-homology (CH) domain is found at 1–119 (MELWRQCTHW…YTLSALSWTP (119 aa)). The DH domain occupies 193 to 372 (KRCCCLREIQ…RDLAQCVNEV (180 aa)). The PH domain occupies 401–503 (RPKIDGELKI…WMEQFEMAIS (103 aa)). A Phorbol-ester/DAG-type zinc finger spans residues 514–563 (GHDFQMFSFEETTSCKACQMLLRGTFYQGYRCQRCRAPAHKECLGRVPPC). The tract at residues 567–589 (GQDYSGTMKKDKPHRRAQDKKRN) is disordered. The SH3 1 domain occupies 591–659 (LGLPKMEVCQ…PCNRVKPYVH (69 aa)). Residues 670-764 (WYAGPMERAG…SLDTTLQFPF (95 aa)) form the SH2 domain. The region spanning 781 to 841 (KIFGTAKARY…PSNYVEEDYS (61 aa)) is the SH3 2 domain. A phosphotyrosine mark is found at Tyr825 and Tyr843.

As to quaternary structure, interacts with SHB. Interacts with APS, DOCK2, GRB2, GRB3, DOCK2, SLA, TEC and ZNF655/VIK. Interacts with SIAH2; without leading to its degradation. Associates with BLNK, PLCG1, GRB2 and NCK1 in a B-cell antigen receptor-dependent fashion. Interacts with CBLB; which inhibits tyrosine phosphorylation and down-regulates activity. May interact with CCPG1. Interacts with CLNK. Interacts with THEMIS2. Interacts with NEK3 and this interaction is prolactin-dependent. Interacts with ITK. Interacts with PTK2B/PYK2. Interacts with HCK. Interacts with PTK2B/PYK2. Interacts (via SH2 domain) with SYK. Interacts with ANKRD54. Interacts with CD6. Interacts with LCP2; this interaction plays a role in TCR-mediated cytokine production. Phosphorylated by FYN. Phosphorylated on tyrosine residues by HCK in response to IFNG and bacterial lipopolysaccharide (LPS).

Functionally, couples tyrosine kinase signals with the activation of the Rho/Rac GTPases, thus leading to cell differentiation and/or proliferation. The chain is Proto-oncogene vav (VAV1) from Bos taurus (Bovine).